The chain runs to 160 residues: uncharacterized protein (160 aa).

Residues 7–151 (LLINFKTLEE…NPYIWHPDMD (145 aa)) form the N-acetyltransferase domain.

This is an uncharacterized protein from Bacillus velezensis (strain DSM 23117 / BGSC 10A6 / LMG 26770 / FZB42) (Bacillus amyloliquefaciens subsp. plantarum).